A 324-amino-acid polypeptide reads, in one-letter code: Aspartate carbamoyltransferase catalytic subunit (324 aa).

Residues arginine 55 and threonine 56 each contribute to the carbamoyl phosphate site. Lysine 83 is an L-aspartate binding site. Carbamoyl phosphate-binding residues include arginine 105, histidine 135, and glutamine 138. L-aspartate-binding residues include arginine 173 and arginine 227. Residues glycine 268 and proline 269 each coordinate carbamoyl phosphate.

This sequence belongs to the aspartate/ornithine carbamoyltransferase superfamily. ATCase family. In terms of assembly, heterododecamer (2C3:3R2) of six catalytic PyrB chains organized as two trimers (C3), and six regulatory PyrI chains organized as three dimers (R2).

It catalyses the reaction carbamoyl phosphate + L-aspartate = N-carbamoyl-L-aspartate + phosphate + H(+). Its pathway is pyrimidine metabolism; UMP biosynthesis via de novo pathway; (S)-dihydroorotate from bicarbonate: step 2/3. Catalyzes the condensation of carbamoyl phosphate and aspartate to form carbamoyl aspartate and inorganic phosphate, the committed step in the de novo pyrimidine nucleotide biosynthesis pathway. This chain is Aspartate carbamoyltransferase catalytic subunit, found in Nocardioides sp. (strain ATCC BAA-499 / JS614).